Reading from the N-terminus, the 260-residue chain is DNA repair protein RecO (260 aa).

Positions 239-260 are disordered; that stretch reads SAGVAAARKAGGDGSDGDEGEQ.

Belongs to the RecO family.

In terms of biological role, involved in DNA repair and RecF pathway recombination. This chain is DNA repair protein RecO, found in Sodalis glossinidius (strain morsitans).